The chain runs to 404 residues: Cysteine desulfurase IscS (404 aa).

Pyridoxal 5'-phosphate contacts are provided by residues 75–76 (AT), N155, Q183, and 203–205 (SAH). The residue at position 206 (K206) is an N6-(pyridoxal phosphate)lysine. T243 contributes to the pyridoxal 5'-phosphate binding site. C328 (cysteine persulfide intermediate) is an active-site residue. [2Fe-2S] cluster is bound at residue C328.

It belongs to the class-V pyridoxal-phosphate-dependent aminotransferase family. NifS/IscS subfamily. As to quaternary structure, homodimer. Forms a heterotetramer with IscU, interacts with other sulfur acceptors. Pyridoxal 5'-phosphate is required as a cofactor.

Its subcellular location is the cytoplasm. It carries out the reaction (sulfur carrier)-H + L-cysteine = (sulfur carrier)-SH + L-alanine. Its pathway is cofactor biosynthesis; iron-sulfur cluster biosynthesis. Master enzyme that delivers sulfur to a number of partners involved in Fe-S cluster assembly, tRNA modification or cofactor biosynthesis. Catalyzes the removal of elemental sulfur atoms from cysteine to produce alanine. Functions as a sulfur delivery protein for Fe-S cluster synthesis onto IscU, an Fe-S scaffold assembly protein, as well as other S acceptor proteins. The chain is Cysteine desulfurase IscS from Vibrio cholerae serotype O1 (strain M66-2).